The chain runs to 357 residues: Alanine racemase (357 aa).

The active-site Proton acceptor; specific for D-alanine is the lysine 33. Lysine 33 carries the N6-(pyridoxal phosphate)lysine modification. Arginine 129 serves as a coordination point for substrate. The active-site Proton acceptor; specific for L-alanine is tyrosine 253. Methionine 301 lines the substrate pocket.

The protein belongs to the alanine racemase family. Requires pyridoxal 5'-phosphate as cofactor.

The catalysed reaction is L-alanine = D-alanine. It functions in the pathway amino-acid biosynthesis; D-alanine biosynthesis; D-alanine from L-alanine: step 1/1. Functionally, catalyzes the interconversion of L-alanine and D-alanine. May also act on other amino acids. This is Alanine racemase (alr) from Pseudomonas fluorescens (strain ATCC BAA-477 / NRRL B-23932 / Pf-5).